The following is a 486-amino-acid chain: Cardiolipin synthase A (486 aa).

2 helical membrane-spanning segments follow: residues 3–23 (TFYT…IAGV) and 38–58 (MAWL…YLSF). 2 PLD phosphodiesterase domains span residues 219-246 (MDLR…VDPR) and 399-426 (EGGL…DMRS). Residues His224, Lys226, Asp231, His404, Lys406, and Asp411 contribute to the active site.

This sequence belongs to the phospholipase D family. Cardiolipin synthase subfamily. ClsA sub-subfamily.

It is found in the cell inner membrane. It carries out the reaction 2 a 1,2-diacyl-sn-glycero-3-phospho-(1'-sn-glycerol) = a cardiolipin + glycerol. Its function is as follows. Catalyzes the reversible phosphatidyl group transfer from one phosphatidylglycerol molecule to another to form cardiolipin (CL) (diphosphatidylglycerol) and glycerol. This is Cardiolipin synthase A from Escherichia fergusonii (strain ATCC 35469 / DSM 13698 / CCUG 18766 / IAM 14443 / JCM 21226 / LMG 7866 / NBRC 102419 / NCTC 12128 / CDC 0568-73).